Here is a 325-residue protein sequence, read N- to C-terminus: Tetraacyldisaccharide 4'-kinase (325 aa).

Residue 55–62 (TAGGNGKT) participates in ATP binding.

It belongs to the LpxK family.

It catalyses the reaction a lipid A disaccharide + ATP = a lipid IVA + ADP + H(+). It participates in glycolipid biosynthesis; lipid IV(A) biosynthesis; lipid IV(A) from (3R)-3-hydroxytetradecanoyl-[acyl-carrier-protein] and UDP-N-acetyl-alpha-D-glucosamine: step 6/6. Transfers the gamma-phosphate of ATP to the 4'-position of a tetraacyldisaccharide 1-phosphate intermediate (termed DS-1-P) to form tetraacyldisaccharide 1,4'-bis-phosphate (lipid IVA). The polypeptide is Tetraacyldisaccharide 4'-kinase (Salmonella choleraesuis (strain SC-B67)).